We begin with the raw amino-acid sequence, 234 residues long: Serum amyloid P-component (234 aa).

An N-terminal signal peptide occupies residues 1–22 (MDKLLSLLGVSILAGLLLEAFA). One can recognise a Pentraxin (PTX) domain in the interval 27–226 (TGKVFVFPRQ…YAVIRPRCVA (200 aa)). Asn54 carries an N-linked (GlcNAc...) asparagine glycan. Cys58 and Cys117 are joined by a disulfide. Ca(2+)-binding residues include Asn81, Glu158, Gln159, Asp160, and Gln170.

Belongs to the pentraxin family. As to quaternary structure, homopentamer. Pentraxin (or pentaxin) have a discoid arrangement of 5 non-covalently bound subunits. Ca(2+) serves as cofactor.

It is found in the secreted. The chain is Serum amyloid P-component (APCS) from Mesocricetus auratus (Golden hamster).